Consider the following 491-residue polypeptide: Cytochrome P450 monooxygenase olcB (491 aa).

Residues 5–27 form a helical membrane-spanning segment; the sequence is LLLSLSVCLLYVFITAFWNLYIH. C435 contacts heme.

Belongs to the cytochrome P450 family. The cofactor is heme.

Its subcellular location is the membrane. The protein operates within secondary metabolite biosynthesis; terpenoid biosynthesis. Functionally, cytochrome P450 monooxygenase; part of the gene cluster that mediates the biosynthesis of 15-deoxyoxalicine B. The first step of the pathway is the synthesis of nicotinyl-CoA from nicotinic acid by the nicotinic acid-CoA ligase olcI. Nicotinyl-CoA is then a substrate of polyketide synthase olcA to produce 4-hydroxy-6-(3-pyridinyl)-2H-pyran-2-one (HPPO) which is further prenylated by the polyprenyl transferase olcH to yield geranylgeranyl-HPPO. Geranylgeranyl pyrophosphate is provided by the cluster-specific geranylgeranyl pyrophosphate synthase olcC. The FAD-dependent monooxygenase olcE catalyzes the epoxidation of geranylgeranyl-HPPO and the terpene cyclase olcD catalyzes the cyclization of the terpenoid component, resulting in the formation of the tricyclic terpene moiety seen in predecaturin E. The cytochrome P450 monooxygenase then catalyzes the allylic oxidation of predecaturin E, which is followed by spirocylization with concomitant loss of one molecule of water to form decaturin E. Decaturin E is the substrate of the cytochrome P450 monooxygenase olcJ which hydroxylates it at the C-29 position to form decaturin F. The short-chain dehydrogenase/reductase olcF may catalyze the oxidation of decaturin F to generate the 29-hydroxyl-27-one intermediate, and subsequent hemiacetal formation probably leads to the formation of decaturin C. The dioxygenase olcK may be a peroxisomal enzyme that catalyzes the hydroxylation of decaturin C into decaturin A once decaturin C is shuttled into the peroxisome by the MFS transporter olcL. Finally the cytochrome P450 monooxygenase olcB catalyzes the oxidative rearrangement to yield 15-deoxyoxalicine B. In the absence of olcJ, decaturin E may be shunted to a pathway in which it is oxidized to a ketone, possibly by olcF, to form decaturin D, which undergoes further allylic oxidation to yield decaturin G. Moreover, in the absence of oclK or oclL, oclB can convert decaturin C into 15-deoxyoxalicine A. The protein is Cytochrome P450 monooxygenase olcB of Penicillium canescens.